The chain runs to 378 residues: uncharacterized protein (378 aa).

The Guanylate cyclase domain occupies 208-317 (GIGFADLSSF…NPVNLAARLV (110 aa)).

The protein belongs to the adenylyl cyclase class-4/guanylyl cyclase family.

This is an uncharacterized protein from Mycobacterium bovis (strain ATCC BAA-935 / AF2122/97).